The primary structure comprises 479 residues: Proline--tRNA ligase (479 aa).

This sequence belongs to the class-II aminoacyl-tRNA synthetase family. ProS type 3 subfamily. Homodimer.

The protein localises to the cytoplasm. It catalyses the reaction tRNA(Pro) + L-proline + ATP = L-prolyl-tRNA(Pro) + AMP + diphosphate. Functionally, catalyzes the attachment of proline to tRNA(Pro) in a two-step reaction: proline is first activated by ATP to form Pro-AMP and then transferred to the acceptor end of tRNA(Pro). The protein is Proline--tRNA ligase of Lachnospira eligens (strain ATCC 27750 / DSM 3376 / VPI C15-48 / C15-B4) (Eubacterium eligens).